An 876-amino-acid polypeptide reads, in one-letter code: DNA topoisomerase 1 (876 aa).

The region spanning 3-150 (KSLVIVESPA…RYKRVVFNEI (148 aa)) is the Toprim domain. Glutamate 9 is a binding site for Mg(2+). The disordered stretch occupies residues 37–69 (LPTAGQTATPTGKAAAASTKKASTTDKEQQKRE). A compositionally biased stretch (low complexity) spans 38-58 (PTAGQTATPTGKAAAASTKKA). Residues 59–69 (STTDKEQQKRE) show a composition bias toward basic and acidic residues. Aspartate 119 lines the Mg(2+) pocket. In terms of domain architecture, Topo IA-type catalytic spans 166–582 (NMDGVNAQQA…EFFADFSRDL (417 aa)). Positions 200–205 (SAGRVQ) are interaction with DNA. Tyrosine 327 (O-(5'-phospho-DNA)-tyrosine intermediate) is an active-site residue. C4-type zinc fingers lie at residues 668–695 (CPICETAMDAYLIDDKRKLHVCGNNPNC) and 717–742 (CDKCGSDMVLKNGRFGKYMGCTNDAC).

It belongs to the type IA topoisomerase family. Monomer. Mg(2+) serves as cofactor.

The catalysed reaction is ATP-independent breakage of single-stranded DNA, followed by passage and rejoining.. Releases the supercoiling and torsional tension of DNA, which is introduced during the DNA replication and transcription, by transiently cleaving and rejoining one strand of the DNA duplex. Introduces a single-strand break via transesterification at a target site in duplex DNA. The scissile phosphodiester is attacked by the catalytic tyrosine of the enzyme, resulting in the formation of a DNA-(5'-phosphotyrosyl)-enzyme intermediate and the expulsion of a 3'-OH DNA strand. The free DNA strand then undergoes passage around the unbroken strand, thus removing DNA supercoils. Finally, in the religation step, the DNA 3'-OH attacks the covalent intermediate to expel the active-site tyrosine and restore the DNA phosphodiester backbone. This chain is DNA topoisomerase 1, found in Vibrio cholerae serotype O1 (strain ATCC 39315 / El Tor Inaba N16961).